A 449-amino-acid polypeptide reads, in one-letter code: 3-phosphoshikimate 1-carboxyvinyltransferase (449 aa).

Residues 1–29 are disordered; that stretch reads MSHDSVPSPITARAGTPLRGRLRPPGDKS. 3-phosphoshikimate contacts are provided by K28, S29, and R33. K28 is a phosphoenolpyruvate binding site. Positions 101 and 129 each coordinate phosphoenolpyruvate. 3-phosphoshikimate is bound by residues S175, Q177, D330, and K357. Q177 provides a ligand contact to phosphoenolpyruvate. The active-site Proton acceptor is D330. 2 residues coordinate phosphoenolpyruvate: R361 and R405.

Belongs to the EPSP synthase family. As to quaternary structure, monomer.

The protein localises to the cytoplasm. It carries out the reaction 3-phosphoshikimate + phosphoenolpyruvate = 5-O-(1-carboxyvinyl)-3-phosphoshikimate + phosphate. The protein operates within metabolic intermediate biosynthesis; chorismate biosynthesis; chorismate from D-erythrose 4-phosphate and phosphoenolpyruvate: step 6/7. Its function is as follows. Catalyzes the transfer of the enolpyruvyl moiety of phosphoenolpyruvate (PEP) to the 5-hydroxyl of shikimate-3-phosphate (S3P) to produce enolpyruvyl shikimate-3-phosphate and inorganic phosphate. The protein is 3-phosphoshikimate 1-carboxyvinyltransferase of Methylobacterium sp. (strain 4-46).